The primary structure comprises 289 residues: Glycerol facilitator-aquaporin gla (289 aa).

Helical transmembrane passes span 10–30 (ITEF…VANV) and 41–61 (SWMI…VAFG). The short motif at 68-70 (NPA) is the NPA 1 element. Helical transmembrane passes span 87 to 107 (AQYI…IVMV), 151 to 171 (FLGS…FFGS), and 209 to 229 (MIAH…LGGP). Residues 235–237 (NPA) carry the NPA 2 motif. Residues 264-284 (WYAWVPVLAPILASLAAVALF) form a helical membrane-spanning segment.

It belongs to the MIP/aquaporin (TC 1.A.8) family.

It is found in the cell membrane. Mixed channel protein that transports both water and glycerol. The protein is Glycerol facilitator-aquaporin gla (gla) of Lactococcus lactis subsp. cremoris (Streptococcus cremoris).